The primary structure comprises 138 residues: Gastrula zinc finger protein XlCGF44.2 (138 aa).

C2H2-type zinc fingers lie at residues 5 to 27 (FACT…KRIH), 32 to 54 (FVCA…QRLH), 60 to 82 (FTCT…QQIH), 88 to 110 (YVCS…MKTH), and 116 to 138 (FACS…QESH).

This sequence belongs to the krueppel C2H2-type zinc-finger protein family.

The protein localises to the nucleus. Its function is as follows. May be involved in transcriptional regulation. This chain is Gastrula zinc finger protein XlCGF44.2, found in Xenopus laevis (African clawed frog).